The chain runs to 573 residues: Urease subunit alpha (573 aa).

Ni(2+)-binding residues include His139, His141, and Lys222. Lys222 is modified (N6-carboxylysine). His224 contributes to the substrate binding site. Ni(2+)-binding residues include His251 and His277. The active-site Proton donor is His325. Position 365 (Asp365) interacts with Ni(2+).

Belongs to the metallo-dependent hydrolases superfamily. Urease alpha subunit family. Heterotrimer of UreA (gamma), UreB (beta) and UreC (alpha) subunits. Three heterotrimers associate to form the active enzyme. Requires Ni cation as cofactor. Carboxylation allows a single lysine to coordinate two nickel ions.

The protein resides in the cytoplasm. It carries out the reaction urea + 2 H2O + H(+) = hydrogencarbonate + 2 NH4(+). It participates in nitrogen metabolism; urea degradation; CO(2) and NH(3) from urea (urease route): step 1/1. This chain is Urease subunit alpha, found in Flavobacterium johnsoniae (strain ATCC 17061 / DSM 2064 / JCM 8514 / BCRC 14874 / CCUG 350202 / NBRC 14942 / NCIMB 11054 / UW101) (Cytophaga johnsonae).